Consider the following 261-residue polypeptide: Histone H1-I (261 aa).

Residues 1 to 22 are compositionally biased toward low complexity; sequence MSETEAAPVVAPAAEAAPAAEA. 2 disordered regions span residues 1–63 and 125–261; these read MSET…PPYI and FKLS…KGKK. A compositionally biased stretch (basic and acidic residues) spans 41 to 50; sequence APKEPKAPKE. The H15 domain occupies 58-129; the sequence is THPPYIEMVK…KVKGSFKLSE (72 aa). Positions 133–142 are enriched in basic residues; sequence AKAKKSTPKK. 2 tandem repeats follow at residues 136-140 and 188-192. Positions 136 to 250 are 7 X 5 AA repeats of K-K-[AS]-T-P; it reads KKSTPKKAKA…KKAPAKKSTP (115 aa). A DNA-binding region spans residues 139–142; sequence TPKK. The span at 143–198 shows a compositional bias: basic and acidic residues; sequence AKADGEAKPKKSEAKPKKAEAVKKTKAPKEKVERPKKEKKEKVEKKKATPKAEKPK. The 3; approximate repeat unit spans residues 199–203; the sequence is KAATP. A run of 4 repeats spans residues 209-213, 230-234, 236-240, and 246-250. Residues 227-250 are compositionally biased toward basic residues; the sequence is AKPKKATPSKKAAPKKAPAKKSTP. Basic and acidic residues predominate over residues 251 to 261; sequence KAKEAKSKGKK.

It belongs to the histone H1/H5 family.

Its subcellular location is the nucleus. The protein resides in the chromosome. In terms of biological role, histones H1 are necessary for the condensation of nucleosome chains into higher-order structures. In Volvox carteri (Green alga), this protein is Histone H1-I (H1-I).